Consider the following 279-residue polypeptide: Methyltransferase trt5 (279 aa).

S-adenosyl-L-methionine-binding positions include 124-125 and 152-153; these read DI and DV.

It belongs to the class I-like SAM-binding methyltransferase superfamily. Homodimer.

Its pathway is secondary metabolite biosynthesis; terpenoid biosynthesis. In terms of biological role, methyltransferase; part of the gene cluster that mediates the biosynthesis of terretonin, a fungal meroterpenoid that acts as a mycotoxin. The first step of the pathway is the synthesis of 3,5-dimethylorsellinic acid (DMOA) by the polyketide synthase trt4. DMOA is then prenylated into farnesyl-DMOA by the polyprenyl transferase trt2. Methylation by the methyltransferase trt5 then leads to farnesyl-DMOA methyl ester which is further subject to epoxidation by the FAD-dependent monooxygenase trt8 to yield epoxyfarnesyl-DMOA methyl ester. Cyclization of epoxyfarnesyl-DMOA methyl ester by the terpene cyclase trt1 leads to a tetracycle intermediate which is in turn converted to preterretonin. Dehydrogenase trt9 comes next to transform preterretonin to preterrenoid. The FAD-dependent monooxygenase trt3 is then required for the C-hydroxylation at C16 of preterrenoid to yield terrenoid. The cytochrome P450 trt6 catalyzes three successive oxidations to transform terrenoid into an unstable intermediate, which then undergoes the D-ring expansion and unusual rearrangement of the methoxy group to afford the core skeleton of terretonin. Trt14 catalyzes the D-ring expansion of terretonin involving intramolecular methoxy rearrangement as well as the hydrolysis of the expanded D-ring and the methyl ester moiety. Finally, the nonheme iron-dependent dioxygenase trt7 accomplishes the last two oxidation reactions steps to complete the biosynthesis of terretonin. Terretonin C is produced via spontaneous decarboxylation of the terretonin precursor. Another shunt product of the terretonin biosynthesis is dihydrofarnesyl-DMOA, derived from epoxyfarnesyl-DMOA through hydrolysis of the epoxide. The sequence is that of Methyltransferase trt5 from Aspergillus terreus (strain NIH 2624 / FGSC A1156).